The chain runs to 314 residues: Hydroxyacyl-coenzyme A dehydrogenase, mitochondrial (314 aa).

The transit peptide at 1 to 12 (MAFATRQLVRSL) directs the protein to the mitochondrion. Residues 34 to 39 (GGGLMG) and D57 each bind NAD(+). Residues S73 and K80 each contribute to the CoA site. K80 carries the N6-succinyllysine modification. N6-acetyllysine; alternate is present on residues K81 and K87. 2 positions are modified to N6-succinyllysine; alternate: K81 and K87. E122 is a binding site for NAD(+). Position 125 is an N6-acetyllysine (K125). Residue K127 coordinates NAD(+). K127 carries the post-translational modification N6-(2-hydroxyisobutyryl)lysine. Residue K136 is modified to N6-acetyllysine; alternate. An N6-succinyllysine; alternate modification is found at K136. S149 and N173 together coordinate NAD(+). S149 serves as a coordination point for CoA. N6-acetyllysine is present on K179. N6-acetyllysine; alternate is present on residues K185, K192, and K202. Residues K185, K192, and K202 each carry the N6-succinyllysine; alternate modification. K206 carries the post-translational modification N6-succinyllysine. An N6-acetyllysine; alternate mark is found at K212 and K241. N6-succinyllysine; alternate is present on residues K212 and K241. K305 lines the NAD(+) pocket. Residue K312 is modified to N6-acetyllysine; alternate. Residue K312 is modified to N6-succinyllysine; alternate.

Belongs to the 3-hydroxyacyl-CoA dehydrogenase family. In terms of assembly, homodimer. Interacts with GLUD1; this interaction inhibits the activation of glutamate dehydrogenase 1 (GLUD1). In terms of processing, succinylation at Lys-81, adjacent to a coenzyme A binding site. Desuccinylated by SIRT5.

Its subcellular location is the mitochondrion matrix. The catalysed reaction is a (3S)-3-hydroxyacyl-CoA + NAD(+) = a 3-oxoacyl-CoA + NADH + H(+). The enzyme catalyses (3S)-3-hydroxybutanoyl-CoA + NAD(+) = acetoacetyl-CoA + NADH + H(+). It carries out the reaction (3S)-hydroxydecanoyl-CoA + NAD(+) = 3-oxodecanoyl-CoA + NADH + H(+). It catalyses the reaction (3S)-hydroxyhexadecanoyl-CoA + NAD(+) = 3-oxohexadecanoyl-CoA + NADH + H(+). The protein operates within lipid metabolism; fatty acid beta-oxidation. Its function is as follows. Mitochondrial fatty acid beta-oxidation enzyme that catalyzes the third step of the beta-oxidation cycle for medium and short-chain 3-hydroxy fatty acyl-CoAs (C4 to C10). Plays a role in the control of insulin secretion by inhibiting the activation of glutamate dehydrogenase 1 (GLUD1), an enzyme that has an important role in regulating amino acid-induced insulin secretion. Plays a role in the maintenance of normal spermatogenesis through the reduction of fatty acid accumulation in the testes. This Sus scrofa (Pig) protein is Hydroxyacyl-coenzyme A dehydrogenase, mitochondrial (HADH).